A 104-amino-acid polypeptide reads, in one-letter code: Large ribosomal subunit protein uL24 (104 aa).

It belongs to the universal ribosomal protein uL24 family. Part of the 50S ribosomal subunit.

Its function is as follows. One of two assembly initiator proteins, it binds directly to the 5'-end of the 23S rRNA, where it nucleates assembly of the 50S subunit. One of the proteins that surrounds the polypeptide exit tunnel on the outside of the subunit. The protein is Large ribosomal subunit protein uL24 of Pseudomonas fluorescens (strain ATCC BAA-477 / NRRL B-23932 / Pf-5).